Reading from the N-terminus, the 96-residue chain is MLNSYDLIRRPVITEKSMAAMADRQYTFIVDIRADKTQIKKAVEKVFGVKVEEVRTARFDGKVKRVGVHVGKRSDYKKAMVKLTEDSKTIEFFEGM.

It belongs to the universal ribosomal protein uL23 family. Part of the 50S ribosomal subunit. Contacts protein L29, and trigger factor when it is bound to the ribosome.

One of the early assembly proteins it binds 23S rRNA. One of the proteins that surrounds the polypeptide exit tunnel on the outside of the ribosome. Forms the main docking site for trigger factor binding to the ribosome. The polypeptide is Large ribosomal subunit protein uL23 (Clostridium novyi (strain NT)).